Reading from the N-terminus, the 298-residue chain is TLR adapter interacting with SLC15A4 on the lysosome (298 aa).

The pLxIS motif signature appears at Ser-287 to Ser-291. Ser-291 is subject to Phosphoserine.

As to quaternary structure, interacts (via pLxIS motif) with IRF5; leading to IRF5 activation. Interacts with SLC15A4; leading to its recruitment to endolysosome. In terms of processing, the phosphorylated pLxIS motif constitutes an IRF5-binding motif, leading to recruitment of the transcription factor IRF5 to induce type-I interferons and other cytokines.

The protein resides in the lysosome membrane. The protein localises to the endosome membrane. Its subcellular location is the nucleus. It localises to the cytoplasm. Its function is as follows. Innate immune adapter that mediates the recruitment and activation of IRF5 downstream of endolysosomal toll-like receptors TLR7, TLR8 and TLR9. Following recruitment to endolysosome by SLC15A4 downstream of TLR7, TLR8 and TLR9, specifically recruits IRF5 transcription factor via its pLxIS motif, leading to IRF5 activation and subsequent expression of type I interferons. Plays a role in the regulation of endolysosomal pH in immune cells such as B-cells, dendritic cells and monocytes. This Mus musculus (Mouse) protein is TLR adapter interacting with SLC15A4 on the lysosome.